Here is a 730-residue protein sequence, read N- to C-terminus: Patatin-like phospholipase domain-containing protein CIMG_04897 (730 aa).

The segment covering M1–Q11 has biased composition (basic residues). A disordered region spans residues M1–Y26. The helical transmembrane segment at W97–T117 threads the bilayer. A PNPLA domain is found at L281–D472. The GXSXG motif lies at G312–G316. S314 acts as the Nucleophile in catalysis. The active-site Proton acceptor is the D459. Residues G667–G730 form a disordered region. Positions Q721–G730 are enriched in polar residues.

Belongs to the PLPL family.

The protein localises to the membrane. Functionally, probable lipid hydrolase. In Coccidioides immitis (strain RS) (Valley fever fungus), this protein is Patatin-like phospholipase domain-containing protein CIMG_04897.